We begin with the raw amino-acid sequence, 470 residues long: ATP synthase subunit beta (470 aa).

An ATP-binding site is contributed by 158–165 (GGAGVGKT).

The protein belongs to the ATPase alpha/beta chains family. As to quaternary structure, F-type ATPases have 2 components, CF(1) - the catalytic core - and CF(0) - the membrane proton channel. CF(1) has five subunits: alpha(3), beta(3), gamma(1), delta(1), epsilon(1). CF(0) has three main subunits: a(1), b(2) and c(9-12). The alpha and beta chains form an alternating ring which encloses part of the gamma chain. CF(1) is attached to CF(0) by a central stalk formed by the gamma and epsilon chains, while a peripheral stalk is formed by the delta and b chains.

Its subcellular location is the cell membrane. It carries out the reaction ATP + H2O + 4 H(+)(in) = ADP + phosphate + 5 H(+)(out). In terms of biological role, produces ATP from ADP in the presence of a proton gradient across the membrane. The catalytic sites are hosted primarily by the beta subunits. The protein is ATP synthase subunit beta of Shouchella clausii (strain KSM-K16) (Alkalihalobacillus clausii).